A 427-amino-acid chain; its full sequence is Glutamate-1-semialdehyde 2,1-aminomutase (427 aa).

At K265 the chain carries N6-(pyridoxal phosphate)lysine.

The protein belongs to the class-III pyridoxal-phosphate-dependent aminotransferase family. HemL subfamily. Homodimer. The cofactor is pyridoxal 5'-phosphate.

The protein resides in the cytoplasm. The enzyme catalyses (S)-4-amino-5-oxopentanoate = 5-aminolevulinate. Its pathway is porphyrin-containing compound metabolism; protoporphyrin-IX biosynthesis; 5-aminolevulinate from L-glutamyl-tRNA(Glu): step 2/2. This is Glutamate-1-semialdehyde 2,1-aminomutase from Pseudomonas putida (strain GB-1).